Reading from the N-terminus, the 418-residue chain is Gamma-glutamyl phosphate reductase (418 aa).

Over residues 1-18 the composition is skewed to basic and acidic residues; the sequence is MAIQDEMRQVAEGAREAS. Residues 1-22 form a disordered region; the sequence is MAIQDEMRQVAEGAREASRTLS.

The protein belongs to the gamma-glutamyl phosphate reductase family.

It is found in the cytoplasm. The catalysed reaction is L-glutamate 5-semialdehyde + phosphate + NADP(+) = L-glutamyl 5-phosphate + NADPH + H(+). The protein operates within amino-acid biosynthesis; L-proline biosynthesis; L-glutamate 5-semialdehyde from L-glutamate: step 2/2. In terms of biological role, catalyzes the NADPH-dependent reduction of L-glutamate 5-phosphate into L-glutamate 5-semialdehyde and phosphate. The product spontaneously undergoes cyclization to form 1-pyrroline-5-carboxylate. The protein is Gamma-glutamyl phosphate reductase of Syntrophus aciditrophicus (strain SB).